The chain runs to 220 residues: MKSVIYHALSQKEANDSDVQPSGAQRAEAFVRAFLKRSTPRMSPQAREDQLQRKAVVLEYFTRHKRKEKKKKAKGLSARQRRELRLFDIKPEQQRYSLFLPLHELWKQYIRDLCSGLKPDTQPQMIQAKLLKADLHGAIISVTKSKCPSYVGITGILLQETKHIFKIITKEDRLKVIPKLNCVFTVETDGFISYIYGSKFQLRSSERSAKKFKAKGTIDL.

The residue at position 10 (Ser10) is a Phosphoserine.

The protein belongs to the eukaryotic/archaeal RNase P protein component 1 family. As to quaternary structure, component of nuclear RNase P and RNase MRP ribonucleoproteins. RNase P consists of a catalytic RNA moiety and 10 different protein chains; POP1, POP4, POP5, POP7, RPP14, RPP21, RPP25, RPP30, RPP38 and RPP40. Within the RNase P complex, POP1, POP7 and RPP25 form the 'finger' subcomplex, POP5, RPP14, RPP40 and homodimeric RPP30 form the 'palm' subcomplex, and RPP21, POP4 and RPP38 form the 'wrist' subcomplex. All subunits of the RNase P complex interact with the catalytic RNA. Several subunits of RNase P are also part of the RNase MRP complex. RNase MRP consists of a catalytic RNA moiety and about 8 protein subunits; POP1, POP7, RPP25, RPP30, RPP38, RPP40 and possibly also POP4 and POP5.

It is found in the nucleus. The protein resides in the nucleolus. In terms of biological role, component of ribonuclease P, a ribonucleoprotein complex that generates mature tRNA molecules by cleaving their 5'-ends. This chain is Ribonuclease P protein subunit p29 (POP4), found in Homo sapiens (Human).